Here is a 212-residue protein sequence, read N- to C-terminus: Shuttling pre-60S factor ECM1 (212 aa).

Disordered stretches follow at residues 28–48 (KISK…EVKD) and 188–212 (SLAE…DVEE). The residue at position 188 (serine 188) is a Phosphoserine. A compositionally biased stretch (polar residues) spans 191 to 201 (EDNTVQKTPTN).

It belongs to the ECM1 family. In terms of assembly, associates with the pre-60S ribosomal particle and the nucleopore complex.

It localises to the nucleus. The protein localises to the nucleolus. The protein resides in the cytoplasm. In terms of biological role, pre-ribosomal factor involved in 60S ribosomal protein subunit export from the nucleus. The chain is Shuttling pre-60S factor ECM1 (ECM1) from Saccharomyces cerevisiae (strain ATCC 204508 / S288c) (Baker's yeast).